Reading from the N-terminus, the 492-residue chain is V-type proton ATPase subunit B 2 (492 aa).

This sequence belongs to the ATPase alpha/beta chains family. In terms of assembly, V-ATPase is a heteromultimeric enzyme composed of a peripheral catalytic V1 complex (main components: subunits A, B, C, D, E, and F) attached to an integral membrane V0 proton pore complex (main component: the proteolipid protein).

Its function is as follows. Non-catalytic subunit of the peripheral V1 complex of vacuolar ATPase. V-ATPase is responsible for acidifying a variety of intracellular compartments in eukaryotic cells. The protein is V-type proton ATPase subunit B 2 of Acetabularia acetabulum (Mermaid's wine glass).